The chain runs to 637 residues: Chaperone protein DnaK (637 aa).

Position 198 is a phosphothreonine; by autocatalysis (threonine 198). Positions 597-637 (MYAKTSQAGAGPQPGAGPGTGGQGPGKKDEDVVDADFEEVK) are disordered. Residues 608 to 621 (PQPGAGPGTGGQGP) are compositionally biased toward gly residues. A compositionally biased stretch (acidic residues) spans 627–637 (DVVDADFEEVK).

Belongs to the heat shock protein 70 family.

Its function is as follows. Acts as a chaperone. The protein is Chaperone protein DnaK of Syntrophus aciditrophicus (strain SB).